The chain runs to 57 residues: Large ribosomal subunit protein bL32 (57 aa).

The disordered stretch occupies residues 1–38 (MAVQQNKPTRSKRGMRRSHDALTAVTSLSVDQTSGEKH). The span at 24-33 (AVTSLSVDQT) shows a compositional bias: polar residues.

It belongs to the bacterial ribosomal protein bL32 family.

The sequence is that of Large ribosomal subunit protein bL32 from Enterobacter sp. (strain 638).